The sequence spans 459 residues: Cysteine--tRNA ligase (459 aa).

Cysteine 31 contributes to the Zn(2+) binding site. The 'HIGH' region motif lies at 33–43; the sequence is PTVYYNPHIGN. Zn(2+)-binding residues include cysteine 216, histidine 241, and glutamate 245. The 'KMSKS' region signature appears at 274 to 278; that stretch reads KMSKS. Lysine 277 contacts ATP.

This sequence belongs to the class-I aminoacyl-tRNA synthetase family. In terms of assembly, monomer. It depends on Zn(2+) as a cofactor.

The protein localises to the cytoplasm. It carries out the reaction tRNA(Cys) + L-cysteine + ATP = L-cysteinyl-tRNA(Cys) + AMP + diphosphate. This chain is Cysteine--tRNA ligase, found in Rickettsia africae (strain ESF-5).